A 220-amino-acid polypeptide reads, in one-letter code: Zip homologous protein 1 (220 aa).

The segment at 6-44 adopts an RING-type zinc-finger fold; that stretch reads CNGCGCSPSKRQFFITACSHVFCETCRTTPTADFCHLCK. Residues 124–155 adopt a coiled-coil conformation; that stretch reads LTSFEENNRKKLEDIERENEKLRNLISALELK. 2 disordered regions span residues 166–186 and 201–220; these read EFFM…SDVD and RSDS…GSLF. Polar residues predominate over residues 171 to 180; it reads GTPTSSNPSV.

In terms of assembly, interacts with zhp-2; the interaction is required for their chromosome association and stability. As to expression, expressed in the germline.

It is found in the chromosome. In terms of biological role, recruited co-dependently with zhp-2 to the synaptonemal complex between homologous chromosome pairs to regulate the formation and number of crossover events between homologs during meiotic recombination. Together with zhp-2, promotes the accumulation of pro-crossover proteins, including zhp-3 and zhp-4, at a designated crossover site along the recombination intermediate. Limits the number of crossover sites along a recombination intermediate by restricting the association of these pro-crossover proteins with other recombination sites during late prophase. Also, together with zhp-2, plays a role in chromosome remodeling following crossover formation to promote two successive rounds of chromosome segregation during meiosis. This Caenorhabditis elegans protein is Zip homologous protein 1.